The sequence spans 252 residues: Large ribosomal subunit protein uL29m (252 aa).

Lysine 146 is subject to N6-acetyllysine. Positions 230–240 (KKKEKILHAKF) are enriched in basic residues. A disordered region spans residues 230–252 (KKKEKILHAKFPHLSQERKSSSV).

Belongs to the universal ribosomal protein uL29 family. As to quaternary structure, component of the mitochondrial ribosome large subunit (39S) which comprises a 16S rRNA and about 50 distinct proteins.

Its subcellular location is the mitochondrion. This Mus musculus (Mouse) protein is Large ribosomal subunit protein uL29m (Mrpl47).